A 264-amino-acid polypeptide reads, in one-letter code: 3-methyl-2-oxobutanoate hydroxymethyltransferase (264 aa).

The Mg(2+) site is built by D43 and D82. Residues D43–S44, D82, and K111 contribute to the 3-methyl-2-oxobutanoate site. Residue E113 participates in Mg(2+) binding. E180 serves as the catalytic Proton acceptor.

It belongs to the PanB family. In terms of assembly, homodecamer; pentamer of dimers. Requires Mg(2+) as cofactor.

The protein resides in the cytoplasm. The enzyme catalyses 3-methyl-2-oxobutanoate + (6R)-5,10-methylene-5,6,7,8-tetrahydrofolate + H2O = 2-dehydropantoate + (6S)-5,6,7,8-tetrahydrofolate. The protein operates within cofactor biosynthesis; (R)-pantothenate biosynthesis; (R)-pantoate from 3-methyl-2-oxobutanoate: step 1/2. In terms of biological role, catalyzes the reversible reaction in which hydroxymethyl group from 5,10-methylenetetrahydrofolate is transferred onto alpha-ketoisovalerate to form ketopantoate. This is 3-methyl-2-oxobutanoate hydroxymethyltransferase from Campylobacter fetus subsp. fetus (strain 82-40).